Consider the following 376-residue polypeptide: Aminomethyltransferase (376 aa).

The protein belongs to the GcvT family. In terms of assembly, the glycine cleavage system is composed of four proteins: P, T, L and H.

The enzyme catalyses N(6)-[(R)-S(8)-aminomethyldihydrolipoyl]-L-lysyl-[protein] + (6S)-5,6,7,8-tetrahydrofolate = N(6)-[(R)-dihydrolipoyl]-L-lysyl-[protein] + (6R)-5,10-methylene-5,6,7,8-tetrahydrofolate + NH4(+). Its function is as follows. The glycine cleavage system catalyzes the degradation of glycine. In Nostoc sp. (strain PCC 7120 / SAG 25.82 / UTEX 2576), this protein is Aminomethyltransferase.